The chain runs to 149 residues: Thioredoxin-like protein 4B (149 aa).

Belongs to the DIM1 family. Homodimer. Interacts with the U5-102 kDa protein subunit of the spliceosome.

It localises to the nucleus. Essential role in pre-mRNA splicing. Required in cell cycle progression for S/G(2) transition. The protein is Thioredoxin-like protein 4B (Txnl4b) of Mus musculus (Mouse).